A 399-amino-acid chain; its full sequence is Argininosuccinate synthase (399 aa).

ATP is bound by residues 10 to 18 (AYSGGVDTS) and Ala-38. Tyr-89 is a binding site for L-citrulline. Gly-119 contributes to the ATP binding site. L-aspartate contacts are provided by Thr-121, Asn-125, and Asp-126. Position 125 (Asn-125) interacts with L-citrulline. L-citrulline-binding residues include Arg-129, Ser-177, Ser-186, Glu-262, and Tyr-274.

This sequence belongs to the argininosuccinate synthase family. Type 1 subfamily. Homotetramer.

The protein resides in the cytoplasm. The enzyme catalyses L-citrulline + L-aspartate + ATP = 2-(N(omega)-L-arginino)succinate + AMP + diphosphate + H(+). It participates in amino-acid biosynthesis; L-arginine biosynthesis; L-arginine from L-ornithine and carbamoyl phosphate: step 2/3. This Rippkaea orientalis (strain PCC 8801 / RF-1) (Cyanothece sp. (strain PCC 8801)) protein is Argininosuccinate synthase.